Reading from the N-terminus, the 54-residue chain is Preprotein translocase subunit SecG (54 aa).

The Cytoplasmic segment spans residues 1-31 (MSSGQNSGGLMSSAGLVRYFDAEDRNSIRID). A helical membrane pass occupies residues 32 to 53 (PKTIVAFGVLFGVGVLVLNALA). I54 is a topological domain (extracellular).

Belongs to the SEC61-beta family. As to quaternary structure, component of the protein translocase complex. Heterotrimer consisting of alpha (SecY), beta (SecG) and gamma (SecE) subunits. Can form oligomers of the heterotrimer.

The protein localises to the cell membrane. Involved in protein export. The function of the beta subunit is unknown, but it may be involved in stabilization of the trimeric complex. In Haloquadratum walsbyi (strain DSM 16790 / HBSQ001), this protein is Preprotein translocase subunit SecG.